The sequence spans 226 residues: uncharacterized protein (226 aa).

The region spanning 18–219 (LTIRNYTETD…YGVLMEWKNV (202 aa)) is the N-acetyltransferase domain.

Belongs to the acetyltransferase family.

This is an uncharacterized protein from Bacillus subtilis (strain 168).